A 392-amino-acid polypeptide reads, in one-letter code: Phosphoglycerate kinase (392 aa).

Substrate-binding positions include 21–23 (DLN), Arg36, 59–62 (HLGR), Arg114, and Arg147. ATP contacts are provided by residues Lys198, Glu320, and 346–349 (GGDT).

It belongs to the phosphoglycerate kinase family. Monomer.

The protein resides in the cytoplasm. The enzyme catalyses (2R)-3-phosphoglycerate + ATP = (2R)-3-phospho-glyceroyl phosphate + ADP. The protein operates within carbohydrate degradation; glycolysis; pyruvate from D-glyceraldehyde 3-phosphate: step 2/5. This chain is Phosphoglycerate kinase, found in Nitrosomonas europaea (strain ATCC 19718 / CIP 103999 / KCTC 2705 / NBRC 14298).